Consider the following 312-residue polypeptide: MKVAVLGAAGGIGQALALLLKLQLPAGSSLSLYDVAPVTPGVAKDLSHIPTDVVVEGFAGTDPSEALKGADIVLISAGVARKPGMTRADLFGVNAGIIRSLTEKVAEQCPKACVGIITNPVNAMVAIAAEVLKKAGVYDKRKLFGITTLDILRAETFIAELKGLDPTRVTIPVIGGHSGVTILPLLSQVQNVEWSSEEEIIALTHRIQNAGTEVVEAKAGGGSATLSMAQAAARFALALVKASQGAKVVECAYVEGDGKYARFFAQPVRLGTEGVEEYLTLGKLSAFEEKALNAMLETLQGDIKSGEDFING.

NAD(+) contacts are provided by residues 7–13 and aspartate 34; that span reads GAAGGIG. 2 residues coordinate substrate: arginine 81 and arginine 87. NAD(+) contacts are provided by residues asparagine 94 and 117–119; that span reads ITN. Residues asparagine 119 and arginine 153 each contribute to the substrate site. Histidine 177 acts as the Proton acceptor in catalysis. Methionine 228 lines the NAD(+) pocket.

This sequence belongs to the LDH/MDH superfamily. MDH type 1 family. In terms of assembly, homodimer.

The enzyme catalyses (S)-malate + NAD(+) = oxaloacetate + NADH + H(+). In terms of biological role, catalyzes the reversible oxidation of malate to oxaloacetate. The protein is Malate dehydrogenase of Mannheimia succiniciproducens (strain KCTC 0769BP / MBEL55E).